The following is a 292-amino-acid chain: Syntaxin-19 (292 aa).

Over residues 1 to 24 (MKDRLPELKQRTKETELSKDKDVP) the composition is skewed to basic and acidic residues. The segment at 1 to 28 (MKDRLPELKQRTKETELSKDKDVPTTEA) is disordered. Positions 46–122 (VAERHLHEIQ…VKEVKKSEDE (77 aa)) form a coiled coil. Residues 209–271 (LSEIEQRHKE…NTTKEKFGLA (63 aa)) form the t-SNARE coiled-coil homology domain.

It belongs to the syntaxin family. As to quaternary structure, interacts with EGFR.

It is found in the cell membrane. It localises to the cytoplasm. Its function is as follows. Plays a role in endosomal trafficking of the epidermal growth factor receptor (EGFR). This is Syntaxin-19 (STX19) from Bos taurus (Bovine).